The chain runs to 48 residues: uncharacterized protein (48 aa).

Residues 1–30 are disordered; it reads MLGRTKLGNRNAQANNNAKKKNGFQTHFDS.

This is an uncharacterized protein from Bacillus subtilis (strain 168).